A 349-amino-acid polypeptide reads, in one-letter code: Sexual stage-specific protein G37 (349 aa).

Positions 1–18 are cleaved as a signal peptide; the sequence is MKLYLVTFLFFVIYKNKT. At 19–91 the chain is on the extracellular side; sequence FVDCVTKKQD…INQVSNNIMR (73 aa). A helical transmembrane segment spans residues 92-112; sequence VYISLLSLFLFPYFSYIGIFG. Over 113–117 the chain is Cytoplasmic; it reads HSRNK. The helical transmembrane segment at 118–138 threads the bilayer; the sequence is ANLTLSSLLAYFALLVSFFLF. The Extracellular segment spans residues 139–140; the sequence is NG. The helical transmembrane segment at 141–161 threads the bilayer; the sequence is ILNIGFVTSLPLVVAVLIFIL. Residues 162–176 lie on the Cytoplasmic side of the membrane; sequence GVSDCEINFLYKYTR. A helical membrane pass occupies residues 177–197; the sequence is YIFCFIISKLIYDVVTYISKD. Residues 198–218 are Extracellular-facing; sequence GANIFDYGFSGHIYMNLLRGK. A helical transmembrane segment spans residues 219–239; sequence YYIVLKLIHLIILSLISLIII. Residues 240–262 lie on the Cytoplasmic side of the membrane; it reads KICPKIFSNNHLKSPISITFDKY. The chain crosses the membrane as a helical span at residues 263–283; that stretch reads IISFLCSLPIATAISQVFYLL. Over 284 to 305 the chain is Extracellular; it reads SKTINPIDPSIFFMIPSSINFS. A helical membrane pass occupies residues 306-326; the sequence is STGTIFSLSIWILMSYLMTFL. At 327 to 349 the chain is on the cytoplasmic side; it reads RNKVEADFNNILNKIPNNLPDFI.

Its subcellular location is the cell membrane. Its function is as follows. Involved in the development of male gametocytes. The sequence is that of Sexual stage-specific protein G37 from Plasmodium berghei (strain Anka).